The sequence spans 336 residues: MIPPLNRYVPALSKNELVKTVTNRDIQFTSFNGKDYPLCFLDEKTPLLFQWFERNPARFGKNDIPIINTEKNPYLNNIIKAATIEKERLIGIFVDGDFFPGQKDAFSKLEYDYENIKVIYRNDIDFSMYDKKLSEIYMENISKQESMPEEKRDCHLLQLLKKELSDIQEGNDSLIKSYLLDKGHGWFDFYRNMAMLKAGQLFLEADKVGCYDLSTNSGCIYLDADMIITEKLGGIYIPDGIAVHVERIDGRASMENGIIAVDRNNHPALLAGLEIMHTKFDADPYSDGVCNGIRKHFNYSLNEDYNSFCDFIEFKHDNIIMNTSQFTQSSWARHVQ.

An N-beta-linked (GlcNAc) arginine; by autocatalysis glycan is attached at Arg24. Residues 50–52 (QWF) and Tyr74 each bind UDP-N-acetyl-alpha-D-glucosamine. Arg152 is a glycosylation site (N-beta-linked (GlcNAc) arginine; by autocatalysis). The DXD motif signature appears at 223–225 (DAD). 224 to 225 (AD) contacts UDP-N-acetyl-alpha-D-glucosamine. A Mn(2+)-binding site is contributed by Asp225. Glu255 acts as the Proton acceptor in catalysis. Mn(2+)-binding residues include Asn322 and Ser324. Residues Ser324 and Ser329 each contribute to the UDP-N-acetyl-alpha-D-glucosamine site. Residue Arg333 is glycosylated (N-beta-linked (GlcNAc) arginine; by autocatalysis).

This sequence belongs to the glycosyltransferase NleB family. It depends on Mn(2+) as a cofactor. Auto-glycosylated: arginine GlcNAcylation is required for activity toward death domain-containing host target proteins.

It localises to the secreted. Its subcellular location is the host cytoplasm. The protein localises to the host cytosol. The enzyme catalyses L-arginyl-[protein] + UDP-N-acetyl-alpha-D-glucosamine = N(omega)-(N-acetyl-beta-D-glucosaminyl)-L-arginyl-[protein] + UDP + H(+). Its activity is regulated as follows. Protein-arginine N-acetylglucosaminyltransferase activity is inhibited by 100066N compound (flavone analog) and 102644N compound (a substituted isoxazole). Functionally, protein-arginine N-acetylglucosaminyltransferase effector that disrupts TNF signaling in infected cells, including NF-kappa-B signaling, apoptosis and necroptosis. Acts by catalyzing the transfer of a single N-acetylglucosamine (GlcNAc) to a conserved arginine residue in the death domain of host proteins TRADD and, to a lower extent, FADD: arginine GlcNAcylation prevents homotypic/heterotypic death domain interactions and assembly of the oligomeric TNF-alpha receptor complex, thereby disrupting TNF signaling. Also acts on host proteins without a death domain: catalyzes arginine GlcNAcylation of host GAPDH protein, thereby preventing GAPDH interaction with TRAF2, leading to inhibit NF-kappa-B signaling. Catalyzes GlcNAcylation of host tubulin-folding cofactor TBCB, thereby promoting microtubule stability. Also mediates auto-GlcNAcylation, which is required for activity toward death domain-containing host target proteins. The polypeptide is Protein-arginine N-acetylglucosaminyltransferase SseK1 (Salmonella enteritidis (strain 2009K0958)).